The chain runs to 251 residues: Small ribosomal subunit protein uS2 (251 aa).

It belongs to the universal ribosomal protein uS2 family.

The polypeptide is Small ribosomal subunit protein uS2 (Deinococcus deserti (strain DSM 17065 / CIP 109153 / LMG 22923 / VCD115)).